The following is a 180-amino-acid chain: UPF0149 protein XCV3523 (180 aa).

It belongs to the UPF0149 family.

The chain is UPF0149 protein XCV3523 from Xanthomonas euvesicatoria pv. vesicatoria (strain 85-10) (Xanthomonas campestris pv. vesicatoria).